Consider the following 590-residue polypeptide: Leucine-rich repeat transmembrane neuronal protein 4 (590 aa).

Residues 1–30 (MGFHLITQLKGMSVVLVLLPTLLLVMLTGA) form the signal peptide. The LRRNT domain occupies 31 to 61 (QRACPKNCRCDGKIVYCESHAFADIPENISG). Residues 31–424 (QRACPKNCRC…QEYEHVSFHK (394 aa)) lie on the Extracellular side of the membrane. N-linked (GlcNAc...) asparagine glycosylation is present at Asn58. LRR repeat units follow at residues 62–83 (GSQG…QFAG), 86–107 (QLIW…AFQG), 110–131 (RLKE…TFHP), 134–155 (NLRN…QFKG), 158–179 (KLII…VFQD), 182–203 (NLDF…AFAG), 206–226 (KLKE…AHFP), 230–251 (NLRS…LTWT), 254–275 (SLHN…TFKC), and 278–299 (NLQK…TVNA). A glycan (N-linked (GlcNAc...) asparagine) is linked at Asn126. Asn291 carries an N-linked (GlcNAc...) asparagine glycan. An LRRCT domain is found at 311-362 (NMWECSRSICPLFYWLKNFKGNKESTMICAGPKHIQGEKVSDAVETYNICSE). The helical transmembrane segment at 425 to 445 (IIAGSVALFLSVAMILLVIYV) threads the bilayer. The Cytoplasmic portion of the chain corresponds to 446–590 (SWKRYPASMK…PAIYLERIAN (145 aa)).

The protein belongs to the LRRTM family. Peripherally associated with AMPAR complex. AMPAR complex consists of an inner core made of 4 pore-forming GluA/GRIA proteins (GRIA1, GRIA2, GRIA3 and GRIA4) and 4 major auxiliary subunits arranged in a twofold symmetry. One of the two pairs of distinct binding sites is occupied either by CNIH2, CNIH3 or CACNG2, CACNG3. The other harbors CACNG2, CACNG3, CACNG4, CACNG8 or GSG1L. This inner core of AMPAR complex is complemented by outer core constituents binding directly to the GluA/GRIA proteins at sites distinct from the interaction sites of the inner core constituents. Outer core constituents include at least PRRT1, PRRT2, CKAMP44/SHISA9, FRRS1L and NRN1. The proteins of the inner and outer core serve as a platform for other, more peripherally associated AMPAR constituents, including LRRTM4. Alone or in combination, these auxiliary subunits control the gating and pharmacology of the AMPAR complex and profoundly impact their biogenesis and protein processing. Expressed in neuronal tissues.

It is found in the cell membrane. The protein resides in the postsynaptic cell membrane. Its function is as follows. May play a role in the development and maintenance of the vertebrate nervous system. Exhibits strong synaptogenic activity, restricted to excitatory presynaptic differentiation. The polypeptide is Leucine-rich repeat transmembrane neuronal protein 4 (LRRTM4) (Homo sapiens (Human)).